A 447-amino-acid polypeptide reads, in one-letter code: Maltoporin (447 aa).

The signal sequence occupies residues 1–26 (MELRMKKVSVIAAAVAATLAAGSAFA).

The protein belongs to the porin LamB (TC 1.B.3) family. In terms of assembly, homotrimer formed of three 18-stranded antiparallel beta-barrels, containing three independent channels.

It localises to the cell outer membrane. It catalyses the reaction beta-maltose(in) = beta-maltose(out). Its function is as follows. Involved in the transport of maltose and maltodextrins. The sequence is that of Maltoporin from Vibrio campbellii (strain ATCC BAA-1116).